Consider the following 398-residue polypeptide: Alpha-monoglucosyldiacylglycerol synthase (398 aa).

The protein belongs to the glycosyltransferase group 1 family. Glycosyltransferase 4 subfamily. Mg(2+) is required as a cofactor.

Its subcellular location is the cell membrane. The catalysed reaction is a 1,2-diacyl-sn-glycerol + UDP-alpha-D-glucose = a 1,2-diacyl-3-O-(alpha-D-glucopyranosyl)-sn-glycerol + UDP + H(+). With respect to regulation, activated by the negatively charged lipids phosphatidylglycerol (PG), cardiolipin (CL), dodecylphosphate-rac-glycerol (PDG), 1,2-dioleoyl-phosphatidylglycerol (DOPG) and phosphatidylserine (PS). Its function is as follows. Glucosyltransferase involved in the biosynthesis of the non-bilayer-prone membrane lipid alpha-monoglucosyldiacylglycerol. This is a major component for maintaining a certain anionic lipid surface charge density, for balancing the bilayer to non-bilayer phase equilibria and for keeping a constant lipid bilayer spontaneous curvature (curvature packing stress). Catalyzes the transfer of a glucosyl residue from UDP-Glc to diacylglycerol (DAG) acceptor to form the corresponding alpha-glucosyl-DAG (1,2-diacyl-3-O-(alpha-D-glucopyranosyl)-sn-glycerol). It can only use UDP-Glc as sugar donor and DAG is the preferred substrate. The protein is Alpha-monoglucosyldiacylglycerol synthase (mgs) of Acholeplasma laidlawii.